A 109-amino-acid polypeptide reads, in one-letter code: Protein TAR1 (109 aa).

A disordered region spans residues 62–109 (HFTNNWDPRHTGFSPSMTSCSKEHRQGPATKLPSSNYNSDVEDARFQI).

Its subcellular location is the mitochondrion. In terms of biological role, may be involved in mtDNA stability or mitochondrial gene expression regulation at the post-transcriptional level. This is Protein TAR1 (TAR1-A) from Kluyveromyces lactis (strain ATCC 8585 / CBS 2359 / DSM 70799 / NBRC 1267 / NRRL Y-1140 / WM37) (Yeast).